Consider the following 326-residue polypeptide: ELMO domain-containing protein 1 (326 aa).

The ELMO domain occupies 133–306 (QHEEMLLKLW…KFRKRIIKQL (174 aa)).

Acts as a GTPase-activating protein (GAP) toward guanine nucleotide exchange factors like ARL2, ARL3, ARF1 and ARF6, but not for GTPases outside the Arf family. The protein is ELMO domain-containing protein 1 (Elmod1) of Mus musculus (Mouse).